The sequence spans 292 residues: uncharacterized protein (292 aa).

10 helical membrane passes run 6–26, 32–52, 68–88, 94–114, 123–143, 147–167, 182–202, 214–234, 242–262, and 265–285; these read LGIISVTLIWGYTWVAMKVGI, LLFSGLRLFIGAVPLFLILFI, IIMSLLMGLGYMGILTYGMQF, TSVLVYTMPIFVTVISHFSLN, MGLVCGLFGLLFIFGKEMLNI, ALFGELCVLVAALSWGIANVF, AWHLMMGAVMLLVFSFIFEAV, SLLFNGLLSTGFTFVVWFWVL, ASMALMFVPVLALFFGWLQLH, and ITINIILGALLICCGIFMNTF. EamA domains are found at residues 13–137 and 159–285; these read LIWG…FIFG and LSWG…MNTF.

It belongs to the EamA transporter family.

The protein resides in the cell membrane. This is an uncharacterized protein from Bacillus subtilis (strain 168).